We begin with the raw amino-acid sequence, 785 residues long: MIKVNRYEIFLDFSFQTGDYKGYEKIEMESDEETVVLDAVGLKIVKAKVNGKEIEFSQDESRVNVKSGSFSGILEVEFEGKVTERKLVGIYKASYKDGYVISTQFEATHARDFIPCFDHPAMKARFKLTVRVDKGLKVISNMPVVREKEENGKVVYEFDETPKMSTYLLYLGIGNFEEIRDEGKIPTIIVATIPGKVQKGRFSMQISRNSIEFYEKYFEIPYQLPKVHLIAIPEFAYGAMENWGAITFRETALLADDSSSVYQKFRVAEVVAHELAHQWFGNLVTLKWWDDLWLNESFATFMSHKAISQLFPSWNFWDYFVLNQTSRALEKDSVSTTHPIEAHVRDPNEVEQMFDDISYGKGASILRMIEAYVGEENFRRGVVNYLKKFSYSNAQGSDLWNSISEVYGSDISPIMADWITKPGYPMVRVSVSGKRVSLEQERFSLIGNVENLLYKIPLTMEVNGKVVTHLLDKERDTMVFEEDVKSLKVNVNRTGFYRVFYYNNSDLVFNSNLSELDKWGIINDYWAFLLAGKIGFKEYERVISKFFNDKDFLPVNELSNELFTLHAINPDKYQGIAKEFHRIQLKNWRNSKDELGRLTYSNILYRLAAIDDEFSLGLSELFRFYGSLDSDTRQGVAVAYAITYEDNSVDELLERFRKETFDEEKLRYLTAMLFFRKPYLVGNTLSLILSGEIKKQDIPLTLSTAAYNPYAKSAVLNWIKMHINFMREAYKGTGILGRRLAEVIPLIGIGAERETEQFFSNLNMPEAERGIGTGLELLKAYSRLK.

Substrate contacts are provided by residues glutamate 106 and 238 to 242; that span reads GAMEN. Residue histidine 273 coordinates Zn(2+). Glutamate 274 acts as the Proton acceptor in catalysis. 2 residues coordinate Zn(2+): histidine 277 and glutamate 296.

This sequence belongs to the peptidase M1 family. In terms of assembly, co-immunoprecipitates with the 60 kDa chaperonin. The cofactor is Zn(2+). In terms of processing, can be phosphorylated by cell extracts.

It is found in the cytoplasm. The catalysed reaction is Release of an N-terminal amino acid, Xaa-|-Yaa-, in which Xaa is preferably Leu, but may be other amino acids including Pro although not Arg or Lys, and Yaa may be Pro. Amino acid amides and methyl esters are also readily hydrolyzed, but rates on arylamides are exceedingly low.. Its function is as follows. Preferentially acts as a leucyl-aminopeptidase, although it also has activity against other substrates. This is Leucyl aminopeptidase (ape2) from Saccharolobus solfataricus (strain ATCC 35092 / DSM 1617 / JCM 11322 / P2) (Sulfolobus solfataricus).